The primary structure comprises 160 residues: MPAEGIPQINLDPGAAEGLRVAVISAQWNAEITDKLHAEAIGAARELGASVEDWRVAGALELPVVVAAACKNFDAVIATGCVIEGETEHFRVVCDAVTYGLTRVSLDTGVPIGNGVLTVANHQQAVDRAGGPEAKENKGADSATAAIHAALVLRQIAAVG.

Residues Trp-28, 59–61 (ALE), and 81–83 (CVI) each bind 5-amino-6-(D-ribitylamino)uracil. 86–87 (ET) is a (2S)-2-hydroxy-3-oxobutyl phosphate binding site. His-89 functions as the Proton donor in the catalytic mechanism. Asn-114 is a 5-amino-6-(D-ribitylamino)uracil binding site. Residue Arg-128 coordinates (2S)-2-hydroxy-3-oxobutyl phosphate.

The protein belongs to the DMRL synthase family.

It carries out the reaction (2S)-2-hydroxy-3-oxobutyl phosphate + 5-amino-6-(D-ribitylamino)uracil = 6,7-dimethyl-8-(1-D-ribityl)lumazine + phosphate + 2 H2O + H(+). It functions in the pathway cofactor biosynthesis; riboflavin biosynthesis; riboflavin from 2-hydroxy-3-oxobutyl phosphate and 5-amino-6-(D-ribitylamino)uracil: step 1/2. Functionally, catalyzes the formation of 6,7-dimethyl-8-ribityllumazine by condensation of 5-amino-6-(D-ribitylamino)uracil with 3,4-dihydroxy-2-butanone 4-phosphate. This is the penultimate step in the biosynthesis of riboflavin. This chain is 6,7-dimethyl-8-ribityllumazine synthase, found in Corynebacterium urealyticum (strain ATCC 43042 / DSM 7109).